Reading from the N-terminus, the 321-residue chain is Basic peroxidase (321 aa).

The signal sequence occupies residues 1–30 (MSYHKSSGTILMVPLFMLLISVNYFMSCNA). Residue Q31 is modified to Pyrrolidone carboxylic acid. 4 cysteine pairs are disulfide-bonded: C41–C117, C74–C79, C123–C317, and C202–C228. H72 acts as the Proton acceptor in catalysis. D73, V76, G78, D80, and S82 together coordinate Ca(2+). Residue P165 participates in substrate binding. H195 contributes to the heme b binding site. T196 is a binding site for Ca(2+). 2 N-linked (GlcNAc...) asparagine glycosylation sites follow: N211 and N221. The Ca(2+) site is built by D241, T244, and D249.

The protein belongs to the peroxidase family. Classical plant (class III) peroxidase subfamily. Requires heme b as cofactor. Ca(2+) is required as a cofactor. In terms of processing, N-glycosylated. Expressed in tracheary elements, roots, young and old hypocotyls, and stems in the partially glycosylated form and in roots and young hypocotyls in the fully glycosylated form. None of the isoforms is significantly expressed in leaves or cotyledons.

Its subcellular location is the secreted. The enzyme catalyses 2 a phenolic donor + H2O2 = 2 a phenolic radical donor + 2 H2O. Its function is as follows. Removal of H(2)O(2), oxidation of toxic reductants, biosynthesis and degradation of lignin, suberization, auxin catabolism, response to environmental stresses such as wounding, pathogen attack and oxidative stress. These functions might be dependent on each isozyme/isoform in each plant tissue. Involved in the synthesis of highly polymerized lignins. The chain is Basic peroxidase (POD1) from Zinnia elegans (Garden zinnia).